The sequence spans 622 residues: Threonine--tRNA ligase (622 aa).

The interval Met1–Glu141 is editing domain. Residues Pro199–Pro498 are catalytic. Residues Cys291, His343, and His467 each contribute to the Zn(2+) site.

The protein belongs to the class-II aminoacyl-tRNA synthetase family. In terms of assembly, homodimer. Requires Zn(2+) as cofactor.

The protein localises to the cytoplasm. The catalysed reaction is tRNA(Thr) + L-threonine + ATP = L-threonyl-tRNA(Thr) + AMP + diphosphate + H(+). In terms of biological role, catalyzes the attachment of threonine to tRNA(Thr) in a two-step reaction: L-threonine is first activated by ATP to form Thr-AMP and then transferred to the acceptor end of tRNA(Thr). Also edits incorrectly charged L-seryl-tRNA(Thr). The protein is Threonine--tRNA ligase of Methanococcus maripaludis (strain C7 / ATCC BAA-1331).